A 311-amino-acid polypeptide reads, in one-letter code: Pyrimidine-specific ribonucleoside hydrolase RihA (311 aa).

Residue His240 is part of the active site.

It belongs to the IUNH family. RihA subfamily.

Functionally, hydrolyzes cytidine or uridine to ribose and cytosine or uracil, respectively. The polypeptide is Pyrimidine-specific ribonucleoside hydrolase RihA (Salmonella paratyphi A (strain ATCC 9150 / SARB42)).